Consider the following 474-residue polypeptide: Ubiquinol-cytochrome-c reductase complex core protein 2, mitochondrial (474 aa).

A mitochondrion-targeting transit peptide spans 1–42 (MKSVVRSKGTQALFRRFSSALGDSINPNQVGVGDNVIRVNGR).

It belongs to the peptidase M16 family. UQCRC2/QCR2 subfamily. In terms of assembly, component of the ubiquinol-cytochrome c oxidoreductase (cytochrome b-c1 complex, complex III, CIII), a multisubunit enzyme composed of 3 respiratory subunits cytochrome b, cytochrome c1 and Rieske protein, 2 core protein subunits, and additional low-molecular weight protein subunits. The complex exists as an obligatory dimer and forms supercomplexes (SCs) in the inner mitochondrial membrane with cytochrome c oxidase (complex IV, CIV).

Its subcellular location is the mitochondrion inner membrane. In terms of biological role, component of the ubiquinol-cytochrome c oxidoreductase, a multisubunit transmembrane complex that is part of the mitochondrial electron transport chain which drives oxidative phosphorylation. The respiratory chain contains 3 multisubunit complexes succinate dehydrogenase (complex II, CII), ubiquinol-cytochrome c oxidoreductase (cytochrome b-c1 complex, complex III, CIII) and cytochrome c oxidase (complex IV, CIV), that cooperate to transfer electrons derived from NADH and succinate to molecular oxygen, creating an electrochemical gradient over the inner membrane that drives transmembrane transport and the ATP synthase. The cytochrome b-c1 complex catalyzes electron transfer from ubiquinol to cytochrome c, linking this redox reaction to translocation of protons across the mitochondrial inner membrane, with protons being carried across the membrane as hydrogens on the quinol. In the process called Q cycle, 2 protons are consumed from the matrix, 4 protons are released into the intermembrane space and 2 electrons are passed to cytochrome c. The chain is Ubiquinol-cytochrome-c reductase complex core protein 2, mitochondrial from Euglena gracilis.